Here is a 1552-residue protein sequence, read N- to C-terminus: ABC multidrug transporter lscH (1552 aa).

A run of 2 helical transmembrane segments spans residues 32–52 (ETILSILPSVLVIVVAPIPII) and 68–88 (WFKKISSICFITLSAALVGLW). Asn91 is a glycosylation site (N-linked (GlcNAc...) asparagine). The next 8 helical transmembrane spans lie at 100 to 120 (STPSAVLTFVLSLVYVLLSTI), 158 to 178 (HSAIPPVFASSLALRVVMLLL), 280 to 300 (LFQIGFTYAQPFLITAAIELA), 311 to 331 (NGYGLIGAYILVYSGIAVSVG), 413 to 433 (AACVMSVGFAIVVMVGTVFLA), 457 to 477 (ALASIKWLKISGLTDVAFSVI), 500 to 520 (ILSICTPILGPLLTFAVFAGI), and 528 to 548 (LTIAKVFTAFSIIVLLNSPLA). Positions 280–559 (LFQIGFTYAQ…IVQALPQISG (280 aa)) constitute an ABC transmembrane type-1 1 domain. The interval 573 to 655 (AEERHDPRST…PDANGDSRDA (83 aa)) is disordered. The span at 581–602 (STTTGTSPESNNGSQQTLSDKQ) shows a compositional bias: polar residues. Asn592 is a glycosylation site (N-linked (GlcNAc...) asparagine). Residues 639–884 (GHLADTTPDA…AELGWADRDL (246 aa)) enclose the ABC transporter 1 domain. 676-683 (GPVGCGKS) contributes to the ATP binding site. Asn719 and Asn834 each carry an N-linked (GlcNAc...) asparagine glycan. Over residues 887 to 912 (QQEKPGKDELNHEHGEYSESAPEKLR) the composition is skewed to basic and acidic residues. The interval 887–917 (QQEKPGKDELNHEHGEYSESAPEKLRRSQTN) is disordered. The next 2 membrane-spanning stretches (helical) occupy residues 957–977 (GWLTITIFVIAICVYAFCDSF) and 1005–1025 (AVLGVGAVAACLIGTWQLFII). The region spanning 963–1241 (IFVIAICVYA…ATITSWVTLE (279 aa)) is the ABC transmembrane type-1 2 domain. A glycan (N-linked (GlcNAc...) asparagine) is linked at Asn1028. Helical transmembrane passes span 1076–1096 (AALGVVMALSFGIAQFILVCV), 1100–1120 (YMAALLPFLLAVLYAIQHFYL), 1184–1204 (WITFAVNMVIMMLAVILIVLT), and 1210–1230 (AIGPGYVGIALSNILAFSATM). An ABC transporter 2 domain is found at 1295–1538 (IELDNVTASY…PTSIFKELYL (244 aa)). Asn1299 and Asn1313 each carry an N-linked (GlcNAc...) asparagine glycan. 1328-1335 (GRTGSGKS) serves as a coordination point for ATP.

The protein belongs to the ABC transporter superfamily. ABCC family. Conjugate transporter (TC 3.A.1.208) subfamily.

It is found in the cell membrane. Its function is as follows. ABC multidrug transporter; part of the gene cluster that mediates the biosynthesis of the lipopeptide antibiotics leucinostatins that show extensive biological activities, including antimalarial, antiviral, antibacterial, antifungal, and antitumor activities, as well as phytotoxic. May be involved in the efflux of leucinostatins. This chain is ABC multidrug transporter lscH, found in Purpureocillium lilacinum (Paecilomyces lilacinus).